The sequence spans 138 residues: Translation initiation factor 5A (138 aa).

Hypusine is present on K37.

The protein belongs to the eIF-5A family.

The protein localises to the cytoplasm. Its function is as follows. Functions by promoting the formation of the first peptide bond. This is Translation initiation factor 5A (eif5a) from Pyrococcus horikoshii (strain ATCC 700860 / DSM 12428 / JCM 9974 / NBRC 100139 / OT-3).